The following is a 590-amino-acid chain: Putative laccase-19 (590 aa).

The first 28 residues, 1 to 28, serve as a signal peptide directing secretion; the sequence is MEKLSMVTSLLCAITVAVLAVAVVSGEA. 2 consecutive Plastocyanin-like domains span residues 36–152 and 161–315; these read VVHE…PRDG and KDVP…YAGA. Residues Asn-41 and Asn-47 are each glycosylated (N-linked (GlcNAc...) asparagine). The Cu cation site is built by His-86 and His-88. Asn-120 is a glycosylation site (N-linked (GlcNAc...) asparagine). 2 residues coordinate Cu cation: His-131 and His-133. N-linked (GlcNAc...) asparagine glycosylation is found at Asn-205, Asn-344, Asn-378, Asn-397, Asn-434, and Asn-465. In terms of domain architecture, Plastocyanin-like 3 spans 424-566; that stretch reads DFPIRPPRPF…ATAFIVEDGP (143 aa). Asn-483, His-486, His-488, His-545, Cys-546, His-547, His-551, and Met-556 together coordinate Cu cation. Positions 565–590 are disordered; it reads GPTPETSLPPPPPEFKRCGNNGLSQP.

Belongs to the multicopper oxidase family. The cofactor is Cu cation.

The protein resides in the secreted. It is found in the extracellular space. Its subcellular location is the apoplast. It carries out the reaction 4 hydroquinone + O2 = 4 benzosemiquinone + 2 H2O. In terms of biological role, lignin degradation and detoxification of lignin-derived products. This is Putative laccase-19 (LAC19) from Oryza sativa subsp. indica (Rice).